A 520-amino-acid chain; its full sequence is GMP synthase [glutamine-hydrolyzing] (520 aa).

One can recognise a Glutamine amidotransferase type-1 domain in the interval 12-205 (KIIVLDYGSQ…AISICGARGD (194 aa)). Cys-89 (nucleophile) is an active-site residue. Active-site residues include His-179 and Glu-181. Positions 206–395 (WSMDNFIDME…LGMPEEIVWR (190 aa)) constitute a GMPS ATP-PPase domain. An ATP-binding site is contributed by 233 to 239 (SGGVDSS).

As to quaternary structure, homodimer.

The enzyme catalyses XMP + L-glutamine + ATP + H2O = GMP + L-glutamate + AMP + diphosphate + 2 H(+). Its pathway is purine metabolism; GMP biosynthesis; GMP from XMP (L-Gln route): step 1/1. Functionally, catalyzes the synthesis of GMP from XMP. In Streptococcus pyogenes serotype M6 (strain ATCC BAA-946 / MGAS10394), this protein is GMP synthase [glutamine-hydrolyzing].